Consider the following 150-residue polypeptide: Large ribosomal subunit protein bL9 (150 aa).

This sequence belongs to the bacterial ribosomal protein bL9 family.

Functionally, binds to the 23S rRNA. The chain is Large ribosomal subunit protein bL9 from Corynebacterium aurimucosum (strain ATCC 700975 / DSM 44827 / CIP 107346 / CN-1) (Corynebacterium nigricans).